Consider the following 272-residue polypeptide: 3-methyl-2-oxobutanoate hydroxymethyltransferase (272 aa).

Mg(2+) is bound by residues Asp53 and Asp92. 3-methyl-2-oxobutanoate-binding positions include 53 to 54 (DS), Asp92, and Lys120. Glu122 contributes to the Mg(2+) binding site. Glu189 acts as the Proton acceptor in catalysis.

It belongs to the PanB family. In terms of assembly, homodecamer; pentamer of dimers. Mg(2+) is required as a cofactor.

Its subcellular location is the cytoplasm. It catalyses the reaction 3-methyl-2-oxobutanoate + (6R)-5,10-methylene-5,6,7,8-tetrahydrofolate + H2O = 2-dehydropantoate + (6S)-5,6,7,8-tetrahydrofolate. It participates in cofactor biosynthesis; (R)-pantothenate biosynthesis; (R)-pantoate from 3-methyl-2-oxobutanoate: step 1/2. Functionally, catalyzes the reversible reaction in which hydroxymethyl group from 5,10-methylenetetrahydrofolate is transferred onto alpha-ketoisovalerate to form ketopantoate. The sequence is that of 3-methyl-2-oxobutanoate hydroxymethyltransferase from Ralstonia pickettii (strain 12J).